We begin with the raw amino-acid sequence, 279 residues long: Phosphonates import ATP-binding protein PhnC (279 aa).

An ABC transporter domain is found at 2-245 (FQLKNVTRQF…AVAAIYGAET (244 aa)). An ATP-binding site is contributed by 34–41 (GRSGAGKS).

Belongs to the ABC transporter superfamily. Phosphonates importer (TC 3.A.1.9.1) family. In terms of assembly, the complex is composed of two ATP-binding proteins (PhnC), two transmembrane proteins (PhnE) and a solute-binding protein (PhnD).

Its subcellular location is the cell inner membrane. The catalysed reaction is phosphonate(out) + ATP + H2O = phosphonate(in) + ADP + phosphate + H(+). Functionally, part of the ABC transporter complex PhnCDE involved in phosphonates import. Responsible for energy coupling to the transport system. The polypeptide is Phosphonates import ATP-binding protein PhnC (Rhizobium meliloti (strain 1021) (Ensifer meliloti)).